A 600-amino-acid chain; its full sequence is Proline--tRNA ligase (600 aa).

Belongs to the class-II aminoacyl-tRNA synthetase family. ProS type 1 subfamily. As to quaternary structure, homodimer.

The protein localises to the cytoplasm. It carries out the reaction tRNA(Pro) + L-proline + ATP = L-prolyl-tRNA(Pro) + AMP + diphosphate. In terms of biological role, catalyzes the attachment of proline to tRNA(Pro) in a two-step reaction: proline is first activated by ATP to form Pro-AMP and then transferred to the acceptor end of tRNA(Pro). As ProRS can inadvertently accommodate and process non-cognate amino acids such as alanine and cysteine, to avoid such errors it has two additional distinct editing activities against alanine. One activity is designated as 'pretransfer' editing and involves the tRNA(Pro)-independent hydrolysis of activated Ala-AMP. The other activity is designated 'posttransfer' editing and involves deacylation of mischarged Ala-tRNA(Pro). The misacylated Cys-tRNA(Pro) is not edited by ProRS. This chain is Proline--tRNA ligase, found in Gloeothece citriformis (strain PCC 7424) (Cyanothece sp. (strain PCC 7424)).